A 294-amino-acid chain; its full sequence is 1D-myo-inositol 2-acetamido-2-deoxy-alpha-D-glucopyranoside deacetylase (294 aa).

Histidine 13, aspartate 16, and histidine 148 together coordinate Zn(2+).

The protein belongs to the MshB deacetylase family. Zn(2+) serves as cofactor.

The catalysed reaction is 1D-myo-inositol 2-acetamido-2-deoxy-alpha-D-glucopyranoside + H2O = 1D-myo-inositol 2-amino-2-deoxy-alpha-D-glucopyranoside + acetate. In terms of biological role, catalyzes the deacetylation of 1D-myo-inositol 2-acetamido-2-deoxy-alpha-D-glucopyranoside (GlcNAc-Ins) in the mycothiol biosynthesis pathway. The sequence is that of 1D-myo-inositol 2-acetamido-2-deoxy-alpha-D-glucopyranoside deacetylase from Geodermatophilus obscurus (strain ATCC 25078 / DSM 43160 / JCM 3152 / CCUG 61914 / KCC A-0152 / KCTC 9177 / NBRC 13315 / NRRL B-3577 / G-20).